A 124-amino-acid polypeptide reads, in one-letter code: Non-specific lipid-transfer protein (124 aa).

A signal peptide spans 1-26; that stretch reads MANSGVMKLVCLVLACMVVAAPLAEA. Cystine bridges form between C30–C77, C40–C54, C55–C100, and C75–C114.

The protein belongs to the plant LTP family.

Its function is as follows. Plant non-specific lipid-transfer proteins transfer phospholipids as well as galactolipids across membranes. May play a role in wax or cutin deposition in the cell walls of expanding epidermal cells and certain secretory tissues. The chain is Non-specific lipid-transfer protein from Macadamia integrifolia (Macadamia nut).